We begin with the raw amino-acid sequence, 817 residues long: Dual specificity tyrosine-phosphorylation-regulated kinase mbk-2 (817 aa).

Disordered regions lie at residues 1–46 (MAAL…HECP), 70–148 (PTSF…GPLG), 186–206 (GSYE…GSQQ), and 301–396 (LPNV…FRPE). The segment covering 7 to 25 (FTRNSRSYGQQPIDVTQQG) has biased composition (polar residues). Composition is skewed to low complexity over residues 70–81 (PTSFSGASSSSS) and 97–111 (NLLG…SNSL). Polar residues-rich tracts occupy residues 122-143 (SGNT…TNNL) and 193-206 (GQAQ…GSQQ). A compositionally biased stretch (low complexity) spans 303-318 (NVGTSSSNGSSNSSSG). Over residues 327 to 351 (LMTQSIGGPNKHLSASHSTLNTAST) the composition is skewed to polar residues. Ser362 carries the post-translational modification Phosphoserine; by cdk-1. The span at 364–392 (SNESLSRSHTSSSGGSQGGHNSNSGSNSG) shows a compositional bias: low complexity. In terms of domain architecture, Protein kinase spans 461 to 774 (YEVLKVIGKG…PAQALKHKWL (314 aa)). ATP is bound by residues 467–475 (IGKGSFGQV) and Lys490. Residue Asp587 is the Proton acceptor of the active site. At Tyr621 the chain carries Phosphotyrosine; by autocatalysis.

Belongs to the protein kinase superfamily. CMGC Ser/Thr protein kinase family. MNB/DYRK subfamily. As to quaternary structure, part of a complex, consisting of pseudophosphatases egg-3, egg-4, egg-5 and kinase mbk-2; this complex is required for the oocyte-to-zygote transition. Interacts (via Tyr-619 and Tyr-621) with egg-4 (via tyrosine-protein phosphatase domain) and egg-5 (via tyrosine-protein phosphatase domain); mbk-2 tyrosine phosphorylation enhances the interaction. The interaction inhibits mbk-2 kinase activity and is required for mbk-2 oocyte cortex localization. Interacts (via N-terminus) with egg-3 (via tyrosine-protein phosphatase domain); the interaction does not affect mbk-2 kinase activity, is enhanced by mbk-2 tyrosine phosphorylation status and requires prior binding of mbk-2 to egg-4 and egg-5. It depends on Mg(2+) as a cofactor. Post-translationally, autophosphorylated. In L1 larvae, expressed widely in the nervous system, including head neurons and the ventral nerve cord. In adult animals, continues to be expressed in the nervous system and is also expressed in body wall muscle.

The protein localises to the cytoplasm. It is found in the cell cortex. The enzyme catalyses L-seryl-[protein] + ATP = O-phospho-L-seryl-[protein] + ADP + H(+). It carries out the reaction L-threonyl-[protein] + ATP = O-phospho-L-threonyl-[protein] + ADP + H(+). The catalysed reaction is L-tyrosyl-[protein] + ATP = O-phospho-L-tyrosyl-[protein] + ADP + H(+). With respect to regulation, activated during oocyte maturation by phosphorylation on Ser-362 by cdk-1. The pseudotyrosine phosphatases egg-4 and egg-5 sequester activated mbk-2 until the meiotic divisions and inhibit mbk-2 kinase activity directly, using a mixed-inhibition mechanism that does not involve tyrosine dephosphorylation. In terms of biological role, required for oocyte-to-zygote transition in which it phosphorylates oocyte proteins, including mei-1, oma-1, oma-2, mex-5, and mex-6, modifying their activity and/or stability following meiosis. Through phosphorylation of P granule components including meg-1, promotes the disassembly of zygotic P granules in the anterior cytoplasm during zygote polarization, and thus plays a role in P granule distribution and segregation in early stage embryos following meiosis. Functions in both spindle positioning and in the posterior localization of cytoplasmic determinants, including pie-1, pos-1, and pgl-1, in early embryos. Involved in the asymmetric distribution of plk-1 at the 2-cell embryonic stage. This Caenorhabditis elegans protein is Dual specificity tyrosine-phosphorylation-regulated kinase mbk-2.